The chain runs to 507 residues: ATP synthase subunit alpha, chloroplastic (507 aa).

170 to 177 (GDRQTGKT) serves as a coordination point for ATP.

The protein belongs to the ATPase alpha/beta chains family. F-type ATPases have 2 components, CF(1) - the catalytic core - and CF(0) - the membrane proton channel. CF(1) has five subunits: alpha(3), beta(3), gamma(1), delta(1), epsilon(1). CF(0) has four main subunits: a, b, b' and c.

Its subcellular location is the plastid. The protein localises to the chloroplast thylakoid membrane. The enzyme catalyses ATP + H2O + 4 H(+)(in) = ADP + phosphate + 5 H(+)(out). Produces ATP from ADP in the presence of a proton gradient across the membrane. The alpha chain is a regulatory subunit. In Daucus carota (Wild carrot), this protein is ATP synthase subunit alpha, chloroplastic.